The chain runs to 170 residues: Tubulin polymerization-promoting protein family member 2 (170 aa).

A compositionally biased stretch (low complexity) spans 105 to 117 (TTGVTKSTTVGGV). The tract at residues 105–170 (TTGVTKSTTV…GAGTYDKKNQ (66 aa)) is disordered. Residues 129 to 149 (THKERFDESGKGKGIEGREET) show a composition bias toward basic and acidic residues.

This sequence belongs to the TPPP family. As to expression, only expressed in male reproductive organs, including testis. Expressed in elongating spermatids at stages IV-VIII of the seminiferous epithelial cycle in testis and in mature sperm in the epididymis.

Its subcellular location is the cytoplasm. It is found in the cytosol. The protein localises to the cell projection. It localises to the cilium. The protein resides in the flagellum. Its function is as follows. Probable regulator of microtubule dynamics required for sperm motility. In contrast to other members of the family, has no microtubule bundling activity. This chain is Tubulin polymerization-promoting protein family member 2, found in Mus musculus (Mouse).